A 100-amino-acid polypeptide reads, in one-letter code: MSRSVGTLTRADLAEAINRKMGFSRAESLDMVEAILEHMCGALRKGENVKISGFGSFVLRDKKERIGRNPKTGVEVPITPRRVMTFRASQLLRERIAKGG.

It belongs to the bacterial histone-like protein family. Heterodimer of an alpha and a beta chain.

Its function is as follows. This protein is one of the two subunits of integration host factor, a specific DNA-binding protein that functions in genetic recombination as well as in transcriptional and translational control. The chain is Integration host factor subunit alpha from Erythrobacter litoralis (strain HTCC2594).